Reading from the N-terminus, the 213-residue chain is GTP cyclohydrolase 1 (213 aa).

3 residues coordinate Zn(2+): Cys104, His107, and Cys175.

Belongs to the GTP cyclohydrolase I family. In terms of assembly, homomer.

The catalysed reaction is GTP + H2O = 7,8-dihydroneopterin 3'-triphosphate + formate + H(+). It functions in the pathway cofactor biosynthesis; 7,8-dihydroneopterin triphosphate biosynthesis; 7,8-dihydroneopterin triphosphate from GTP: step 1/1. This chain is GTP cyclohydrolase 1, found in Brucella suis (strain ATCC 23445 / NCTC 10510).